A 521-amino-acid chain; its full sequence is Medium/long-chain-fatty-acid--[acyl-carrier-protein] ligase MbtM (521 aa).

Belongs to the ATP-dependent AMP-binding enzyme family.

The enzyme catalyses a long-chain fatty acid + holo-[ACP] + ATP = a long-chain fatty acyl-[ACP] + AMP + diphosphate. It catalyses the reaction a medium-chain fatty acid + holo-[ACP] + ATP = a medium-chain fatty acyl-[ACP] + AMP + diphosphate. It participates in siderophore biosynthesis; mycobactin biosynthesis. In terms of biological role, activates lipidic moieties required for mycobactin biosynthesis. Converts medium- to long-chain aliphatic fatty acids into acyl adenylate, which is further transferred on to the phosphopantetheine arm of the carrier protein MbtL. The polypeptide is Medium/long-chain-fatty-acid--[acyl-carrier-protein] ligase MbtM (mbtM) (Mycobacterium sp. (strain MCS)).